A 258-amino-acid chain; its full sequence is Hydroxyacylglutathione hydrolase (258 aa).

Histidine 56, histidine 58, aspartate 60, histidine 61, histidine 112, aspartate 132, and histidine 170 together coordinate Zn(2+).

Belongs to the metallo-beta-lactamase superfamily. Glyoxalase II family. In terms of assembly, monomer. It depends on Zn(2+) as a cofactor.

The catalysed reaction is an S-(2-hydroxyacyl)glutathione + H2O = a 2-hydroxy carboxylate + glutathione + H(+). Its pathway is secondary metabolite metabolism; methylglyoxal degradation; (R)-lactate from methylglyoxal: step 2/2. Its function is as follows. Thiolesterase that catalyzes the hydrolysis of S-D-lactoyl-glutathione to form glutathione and D-lactic acid. The polypeptide is Hydroxyacylglutathione hydrolase (Pseudomonas aeruginosa (strain ATCC 15692 / DSM 22644 / CIP 104116 / JCM 14847 / LMG 12228 / 1C / PRS 101 / PAO1)).